The chain runs to 644 residues: Exoribonuclease 2 (644 aa).

Residues 189–516 (REDLTALDFV…NHRLLKAVIK (328 aa)) form the RNB domain. Residues 561-643 (GTRFAAEIVD…ETRGIIARPV (83 aa)) form the S1 motif domain.

The protein belongs to the RNR ribonuclease family. RNase II subfamily.

The protein localises to the cytoplasm. It catalyses the reaction Exonucleolytic cleavage in the 3'- to 5'-direction to yield nucleoside 5'-phosphates.. Functionally, involved in mRNA degradation. Hydrolyzes single-stranded polyribonucleotides processively in the 3' to 5' direction. In Shigella sonnei (strain Ss046), this protein is Exoribonuclease 2.